The primary structure comprises 231 residues: Octanoyltransferase (231 aa).

Residues 49-224 (ADTPDEIWLL…ALQRLLPPVY (176 aa)) enclose the BPL/LPL catalytic domain. Substrate contacts are provided by residues 88–95 (RGGQITYH), 155–157 (ALG), and 168–170 (GLA). The active-site Acyl-thioester intermediate is Cys-186.

It belongs to the LipB family.

The protein localises to the cytoplasm. It carries out the reaction octanoyl-[ACP] + L-lysyl-[protein] = N(6)-octanoyl-L-lysyl-[protein] + holo-[ACP] + H(+). Its pathway is protein modification; protein lipoylation via endogenous pathway; protein N(6)-(lipoyl)lysine from octanoyl-[acyl-carrier-protein]: step 1/2. Functionally, catalyzes the transfer of endogenously produced octanoic acid from octanoyl-acyl-carrier-protein onto the lipoyl domains of lipoate-dependent enzymes. Lipoyl-ACP can also act as a substrate although octanoyl-ACP is likely to be the physiological substrate. This Aromatoleum aromaticum (strain DSM 19018 / LMG 30748 / EbN1) (Azoarcus sp. (strain EbN1)) protein is Octanoyltransferase.